Here is a 360-residue protein sequence, read N- to C-terminus: DNA integrity scanning protein DisA (360 aa).

The region spanning 11 to 149 is the DAC domain; it reads ELDLSSILQF…ENMKYTLKDI (139 aa). ATP contacts are provided by residues glycine 78, leucine 96, and 109-113; that span reads MRHRT.

The protein belongs to the DisA family. Homooligomer. Interacts with RadA. It depends on Mg(2+) as a cofactor.

The protein resides in the cytoplasm. The enzyme catalyses 2 ATP = 3',3'-c-di-AMP + 2 diphosphate. Diadenylate cyclase (DAC) activity is inhibited 2-fold by Holliday junction (HJ) DNA, further addition of RecG inhibits DAC activity 11-fold; RecG may relocate DisA from the HJ. DAC is inhibited by the interaction with RadA. Diadenylate cyclase activity is not affected by ssDNA or dsDNA, but three- and four-way junctions strongly inhibit the activity of DisA, suggesting the enzyme is regulated by branched nucleic acids. In terms of biological role, participates in a DNA-damage check-point that is active prior to asymmetric division when DNA is damaged. Forms globular foci that rapidly scan along the chromosomes during sporulation, searching for lesions. Its ability to scan through the chromosome rapidly is due to its non-specific DNA-binding. When a lesion is present, DisA pauses at the lesion site. This triggers a cellular response that culminates in a temporary block in sporulation initiation. It is required, at least partially, to inhibit the activity of the transcription factor spo0A, which controls, among others, early sporulation genes. In B.subtilis c-di-AMP is a second messenger that mediates growth, DNA repair and cell wall homeostasis; it is toxic when present in excess. Limits the replication fork reggression activity of RecG; DisA inhibits the ATPase activity of RecG. By limiting RecG-mediated fork regression, DisA provides time for removal of potentially lethal DNA lesions. Functionally, one of 3 paralogous diadenylate cyclases (DAC) in this bacteria. Has diadenylate cyclase activity, catalyzing the condensation of 2 ATP molecules into cyclic di-AMP (c-di-AMP). c-di-AMP acts as a signaling molecule that couples DNA integrity with progression of sporulation. The rise in c-di-AMP level generated by DisA while scanning the chromosome operates as a positive signal that advances sporulation; upon encountering a lesion, the DisA focus arrests at the damaged site and halts c-di-AMP synthesis. Does not convert GTP to c-di-GMP. This is DNA integrity scanning protein DisA from Bacillus subtilis (strain 168).